The following is a 372-amino-acid chain: tRNA-specific 2-thiouridylase MnmA (372 aa).

ATP-binding positions include 13–20 (GMSGGVDS) and M39. The tract at residues 99-101 (NPD) is interaction with target base in tRNA. The active-site Nucleophile is the C104. C104 and C200 are joined by a disulfide. G128 lines the ATP pocket. The tract at residues 150 to 152 (KDQ) is interaction with tRNA. The Cysteine persulfide intermediate role is filled by C200. Residues 310–311 (RY) form an interaction with tRNA region.

This sequence belongs to the MnmA/TRMU family.

The protein resides in the cytoplasm. The enzyme catalyses S-sulfanyl-L-cysteinyl-[protein] + uridine(34) in tRNA + AH2 + ATP = 2-thiouridine(34) in tRNA + L-cysteinyl-[protein] + A + AMP + diphosphate + H(+). In terms of biological role, catalyzes the 2-thiolation of uridine at the wobble position (U34) of tRNA, leading to the formation of s(2)U34. The sequence is that of tRNA-specific 2-thiouridylase MnmA from Bacillus licheniformis (strain ATCC 14580 / DSM 13 / JCM 2505 / CCUG 7422 / NBRC 12200 / NCIMB 9375 / NCTC 10341 / NRRL NRS-1264 / Gibson 46).